The chain runs to 380 residues: Putative 8-amino-7-oxononanoate synthase (380 aa).

Arg-18 provides a ligand contact to substrate. 106-107 (GY) contacts pyridoxal 5'-phosphate. His-131 is a binding site for substrate. Pyridoxal 5'-phosphate-binding positions include Ser-179, 205–208 (DEAH), and 236–239 (TFGK). Residue Lys-239 is modified to N6-(pyridoxal phosphate)lysine. Residue Thr-352 coordinates substrate.

This sequence belongs to the class-II pyridoxal-phosphate-dependent aminotransferase family. BioF subfamily. As to quaternary structure, homodimer. Pyridoxal 5'-phosphate serves as cofactor.

It carries out the reaction 6-carboxyhexanoyl-[ACP] + L-alanine + H(+) = (8S)-8-amino-7-oxononanoate + holo-[ACP] + CO2. It participates in cofactor biosynthesis; biotin biosynthesis. Its function is as follows. Catalyzes the decarboxylative condensation of pimeloyl-[acyl-carrier protein] and L-alanine to produce 8-amino-7-oxononanoate (AON), [acyl-carrier protein], and carbon dioxide. This Neisseria gonorrhoeae (strain ATCC 700825 / FA 1090) protein is Putative 8-amino-7-oxononanoate synthase (bioF).